A 524-amino-acid polypeptide reads, in one-letter code: Zinc finger CCCH-type with G patch domain-containing protein (524 aa).

The interval 105–142 is disordered; it reads SEESQPLGSNDETSTCSKGSEEEEEEEEEEEDNTSGMK. Over residues 106–122 the composition is skewed to polar residues; sequence EESQPLGSNDETSTCSK. Positions 125–137 are enriched in acidic residues; that stretch reads EEEEEEEEEEEDN. The C3H1-type zinc finger occupies 184–210; that stretch reads KAMKPCPFFLDGKCLFNDNCRFSHGQV. The interval 279–298 is disordered; sequence RGSDSSSSSSSDEEEDGAAE. The G-patch domain occupies 326–372; that stretch reads TRGIGSKLLVRMGYEFGKGLGRNAEGRVEPIQAVVLPKGKSLDQCME. Disordered regions lie at residues 375–402 and 500–524; these read QRKKAGGKHKHKTSKRRPKASGQGGGAK and GLQQEERSLQREQKKADTHKKMTEF. The span at 376–393 shows a compositional bias: basic residues; it reads RKKAGGKHKHKTSKRRPK.

It is found in the nucleus. Transcription repressor that specifically binds the 5'-GGAG[GA]A[GA]A-3' consensus sequence. Represses transcription by recruiting the chromatin multiprotein complex NuRD to target promoters. Negatively regulates expression of EGFR, a gene involved in cell proliferation, survival and migration. The polypeptide is Zinc finger CCCH-type with G patch domain-containing protein (zgpat) (Xenopus laevis (African clawed frog)).